The primary structure comprises 146 residues: Large ribosomal subunit protein uL11 (146 aa).

It belongs to the universal ribosomal protein uL11 family. As to quaternary structure, part of the ribosomal stalk of the 50S ribosomal subunit. Interacts with L10 and the large rRNA to form the base of the stalk. L10 forms an elongated spine to which L12 dimers bind in a sequential fashion forming a multimeric L10(L12)X complex. One or more lysine residues are methylated.

Its function is as follows. Forms part of the ribosomal stalk which helps the ribosome interact with GTP-bound translation factors. The protein is Large ribosomal subunit protein uL11 of Corynebacterium kroppenstedtii (strain DSM 44385 / JCM 11950 / CIP 105744 / CCUG 35717).